Here is a 253-residue protein sequence, read N- to C-terminus: uncharacterized protein (253 aa).

This is an uncharacterized protein from Escherichia coli O6:H1 (strain CFT073 / ATCC 700928 / UPEC).